Reading from the N-terminus, the 343-residue chain is Glyceraldehyde-3-phosphate dehydrogenase (343 aa).

NAD(+) is bound by residues 13–14 (TI) and glycine 111. 140–142 (SCN) lines the D-glyceraldehyde 3-phosphate pocket. Residue cysteine 141 is the Nucleophile of the active site. Residue arginine 169 coordinates NAD(+). 195-196 (HA) contributes to the D-glyceraldehyde 3-phosphate binding site. NAD(+) is bound at residue glutamine 302.

It belongs to the glyceraldehyde-3-phosphate dehydrogenase family. In terms of assembly, homotetramer.

The protein localises to the cytoplasm. The enzyme catalyses D-glyceraldehyde 3-phosphate + phosphate + NADP(+) = (2R)-3-phospho-glyceroyl phosphate + NADPH + H(+). The catalysed reaction is D-glyceraldehyde 3-phosphate + phosphate + NAD(+) = (2R)-3-phospho-glyceroyl phosphate + NADH + H(+). It functions in the pathway carbohydrate degradation; glycolysis; pyruvate from D-glyceraldehyde 3-phosphate: step 1/5. This Hyperthermus butylicus (strain DSM 5456 / JCM 9403 / PLM1-5) protein is Glyceraldehyde-3-phosphate dehydrogenase.